The sequence spans 432 residues: Glutamyl-tRNA reductase (432 aa).

Residues 49–52, Ser107, 112–114, and Gln118 contribute to the substrate site; these read TCNR and ETQ. Cys50 functions as the Nucleophile in the catalytic mechanism. 186–191 contributes to the NADP(+) binding site; sequence GAGEMG.

Belongs to the glutamyl-tRNA reductase family. As to quaternary structure, homodimer.

The catalysed reaction is (S)-4-amino-5-oxopentanoate + tRNA(Glu) + NADP(+) = L-glutamyl-tRNA(Glu) + NADPH + H(+). The protein operates within porphyrin-containing compound metabolism; protoporphyrin-IX biosynthesis; 5-aminolevulinate from L-glutamyl-tRNA(Glu): step 1/2. In terms of biological role, catalyzes the NADPH-dependent reduction of glutamyl-tRNA(Glu) to glutamate 1-semialdehyde (GSA). This chain is Glutamyl-tRNA reductase, found in Campylobacter jejuni (strain RM1221).